The primary structure comprises 205 residues: uncharacterized protein (205 aa).

This sequence to M.jannaschii MJ0638 and MJ1252 and M.tuberculosis Rv2003c.

This is an uncharacterized protein from Methanocaldococcus jannaschii (strain ATCC 43067 / DSM 2661 / JAL-1 / JCM 10045 / NBRC 100440) (Methanococcus jannaschii).